The following is a 358-amino-acid chain: Probable anti-sigma-M factor YhdL (358 aa).

Residues 74 to 96 (ISVLAVISTLMILPLCTLGSYLY) traverse the membrane as a helical segment.

The N-terminus of YhdL interacts with sigma-M. YhdL interacts specifically with YhdK.

The protein localises to the membrane. The polypeptide is Probable anti-sigma-M factor YhdL (yhdL) (Bacillus subtilis (strain 168)).